The following is a 572-amino-acid chain: Serine/threonine-protein kinase pak-1 (572 aa).

Disordered regions lie at residues 1 to 71 and 156 to 195; these read MKAF…SRPS and QPYS…QGVP. A CRIB domain is found at 67-80; it reads ISRPSNFEHTIHVG. A linker region spans residues 81-294; the sequence is YDPKTGEFTG…IVSIGNPDRK (214 aa). Residues 178 to 195 are compositionally biased toward polar residues; that stretch reads PMTTSTSSAGYNSKQGVP. The Protein kinase domain maps to 295 to 546; it reads YRKVDKIGSG…ASQLLTHPFL (252 aa). ATP-binding positions include 301 to 309 and Lys324; that span reads IGSGASGSV. The Proton acceptor role is filled by Asp414.

This sequence belongs to the protein kinase superfamily. STE Ser/Thr protein kinase family. STE20 subfamily. Interacts with cdc-42 (GTP-bound form) and cedd-10 (GTP-bound form). Mg(2+) is required as a cofactor. Mn(2+) serves as cofactor. Specifically colocalized with cdc-42 and ced-10 at all hypodermal cell boundaries during embryo elongation throughout the second phase of embryogenesis. Expressed mainly in pharyngeal muscles, the CAN neurons, motor neurons in the ventral nerve cord, several cells in the tail region (including the B and Y cells from L1 to adult, the hypodermal blast cell T in the L1 and some of its progeny in later stages), and the distal tip cells.

It is found in the cell membrane. Its subcellular location is the cytoplasm. The protein localises to the cell projection. It localises to the axon. The protein resides in the perikaryon. The enzyme catalyses L-seryl-[protein] + ATP = O-phospho-L-seryl-[protein] + ADP + H(+). The catalysed reaction is L-threonyl-[protein] + ATP = O-phospho-L-threonyl-[protein] + ADP + H(+). In terms of biological role, required for hypodermal cell fusion, together with cdc-42 and ced-10, leading to embryonic body elongation, which involves dramatic cytoskeletal reorganization. Plays a redundant role with max-2 in dorsal axonal guidance in ventral cord commissural motoneurons and in P neuroblast migration. Acts probably downstream of Rho GTPases mig-2 and ced-10 to regulate these 2 processes. Involved in orientating axonal growth of HSN neurons. During gonad morphogenesis and probably in association with pix-1 and git-1, involved in the migration of distal tip cell (DTC) and in maintaining their sharp tapering morphology. In addition, plays a redundant role with max-2 in DTC-mediated guidance of gonad elongation. May phosphorylate mlc-4. This is Serine/threonine-protein kinase pak-1 (pak-1) from Caenorhabditis elegans.